The following is a 546-amino-acid chain: Thermolysin (546 aa).

The N-terminal stretch at 1-25 is a signal peptide; it reads MDKRAMLGAIGLAFGLMAWPFGASA. A propeptide spans 26 to 228 (activation peptide); the sequence is KEKSMVWNEQ…EAKPGGGQPV (203 aa). The Ca(2+) site is built by aspartate 287, aspartate 289, glutamine 291, and aspartate 368. Position 372 (histidine 372) interacts with Zn(2+). Residue glutamate 373 is part of the active site. Residues histidine 376 and glutamate 396 each contribute to the Zn(2+) site. Residues asparagine 413, aspartate 415, glutamate 417, glutamate 420, tyrosine 423, threonine 424, isoleucine 427, and aspartate 430 each coordinate Ca(2+). Residue histidine 461 is the Proton donor of the active site.

This sequence belongs to the peptidase M4 family. Requires Ca(2+) as cofactor. The cofactor is Zn(2+).

The protein localises to the secreted. The catalysed reaction is Preferential cleavage: Xaa-|-Leu &gt; Xaa-|-Phe.. Its function is as follows. Extracellular zinc metalloprotease. Has collagenase activity. The protein is Thermolysin (npr) of Bacillus sp. (strain EA1).